Consider the following 304-residue polypeptide: MLIKTLENLVTEGRNKNTLQIDKEDTLGIIELINNEDKTVAYAVEEQKESIAKAVNIIVDRMKQGGRLFYIGAGTSGRIGILDATECPPTYGVDFELVQAIIAGGNQAIFKAIEGAEDDKELGKQDIIDRGVTSKDVICGIAASGRTPYVIGAMEYAKELGCAVLSITMNPNSEMSKKADLPINIIVGAEVIMGSTRMKSGTAQKMVCNMLTTASMVKMGKVYSNLMVDVKTSNEKLVERAKRIIMIATNVKYDVAEKFLEEADNSVKLAIFMIKSGLDKDSAKSILDRQEGYISEALKSIEKL.

An SIS domain is found at 58 to 221 (IVDRMKQGGR…TTASMVKMGK (164 aa)). Glu86 (proton donor) is an active-site residue. Glu117 is an active-site residue.

It belongs to the GCKR-like family. MurNAc-6-P etherase subfamily. In terms of assembly, homodimer.

The catalysed reaction is N-acetyl-D-muramate 6-phosphate + H2O = N-acetyl-D-glucosamine 6-phosphate + (R)-lactate. It participates in amino-sugar metabolism; N-acetylmuramate degradation. Its function is as follows. Specifically catalyzes the cleavage of the D-lactyl ether substituent of MurNAc 6-phosphate, producing GlcNAc 6-phosphate and D-lactate. This chain is N-acetylmuramic acid 6-phosphate etherase, found in Clostridioides difficile (strain 630) (Peptoclostridium difficile).